We begin with the raw amino-acid sequence, 466 residues long: Probable fibrosin-1 (466 aa).

A Glycyl lysine isopeptide (Lys-Gly) (interchain with G-Cter in SUMO2) cross-link involves residue Lys-8. Asymmetric dimethylarginine is present on residues Arg-229 and Arg-239. Disordered stretches follow at residues 236 to 315 and 410 to 466; these read AWVR…AAAA and LLYS…RADR. Residues 248–272 show a composition bias toward basic and acidic residues; that stretch reads GSDKERPMERREPSVTKEEKDRDLP. Phosphoserine is present on Ser-281. Basic and acidic residues predominate over residues 288–311; it reads RAGEEGARPAKESVRVKEERKEEA. The span at 442 to 459 shows a compositional bias: pro residues; sequence APPPLVPAPRPSSPPRAP.

The sequence is that of Probable fibrosin-1 (Fbrs) from Mus musculus (Mouse).